Reading from the N-terminus, the 433-residue chain is Phosphomethylpyrimidine synthase (433 aa).

Residues asparagine 66, methionine 94, tyrosine 123, histidine 162, 184–186, 225–228, and glutamate 264 each bind substrate; these read SRG and DALR. Histidine 268 provides a ligand contact to Zn(2+). Tyrosine 291 lines the substrate pocket. Histidine 332 is a Zn(2+) binding site. Residues cysteine 408, cysteine 411, and cysteine 415 each contribute to the [4Fe-4S] cluster site.

The protein belongs to the ThiC family. Requires [4Fe-4S] cluster as cofactor.

It catalyses the reaction 5-amino-1-(5-phospho-beta-D-ribosyl)imidazole + S-adenosyl-L-methionine = 4-amino-2-methyl-5-(phosphooxymethyl)pyrimidine + CO + 5'-deoxyadenosine + formate + L-methionine + 3 H(+). It functions in the pathway cofactor biosynthesis; thiamine diphosphate biosynthesis. Its function is as follows. Catalyzes the synthesis of the hydroxymethylpyrimidine phosphate (HMP-P) moiety of thiamine from aminoimidazole ribotide (AIR) in a radical S-adenosyl-L-methionine (SAM)-dependent reaction. The chain is Phosphomethylpyrimidine synthase from Saccharolobus islandicus (strain M.14.25 / Kamchatka #1) (Sulfolobus islandicus).